The chain runs to 610 residues: DNA mismatch repair protein MutL (610 aa).

This sequence belongs to the DNA mismatch repair MutL/HexB family.

Functionally, this protein is involved in the repair of mismatches in DNA. It is required for dam-dependent methyl-directed DNA mismatch repair. May act as a 'molecular matchmaker', a protein that promotes the formation of a stable complex between two or more DNA-binding proteins in an ATP-dependent manner without itself being part of a final effector complex. The protein is DNA mismatch repair protein MutL of Rickettsia africae (strain ESF-5).